Here is a 92-residue protein sequence, read N- to C-terminus: RNA-binding protein Hfq (92 aa).

Residues 9–68 (DPFLNALRRERVPVSIYLVNGIKLQGQVESFDQFVILLKNTVSQMVYKHAISTVVPSRPF) enclose the Sm domain.

The protein belongs to the Hfq family. Homohexamer.

In terms of biological role, RNA chaperone that binds small regulatory RNA (sRNAs) and mRNAs to facilitate mRNA translational regulation in response to envelope stress, environmental stress and changes in metabolite concentrations. Also binds with high specificity to tRNAs. This is RNA-binding protein Hfq from Shewanella piezotolerans (strain WP3 / JCM 13877).